A 274-amino-acid polypeptide reads, in one-letter code: Protein FRG1 homolog (274 aa).

The Nuclear localization signal motif lies at 20–36 (KKNLFKVGKEKKKKNKD). The tract at residues 27–46 (GKEKKKKNKDDKEKIDPDTV) is disordered. Basic and acidic residues predominate over residues 34–43 (NKDDKEKIDP). The short motif at 252–268 (QADGSAHELLLDRRMKM) is the Bipartite nuclear localization signal element.

The protein belongs to the FRG1 family.

It localises to the nucleus. Its subcellular location is the cajal body. The protein resides in the nucleolus. The protein localises to the cytoplasm. In terms of biological role, binds to mRNA in a sequence-independent manner. May play a role in regulation of pre-mRNA splicing or in the assembly of rRNA into ribosomal subunits. May be involved in mRNA transport. May be involved in epigenetic regulation of muscle differentiation through regulation of activity of the histone-lysine N-methyltransferase KMT5B. This Caenorhabditis elegans protein is Protein FRG1 homolog (frg-1).